The sequence spans 518 residues: Probable glycosyltransferase At5g03795 (518 aa).

Residues 1 to 25 (MGDEDVDGKCKNMSACSSTTSYSTK) lie on the Cytoplasmic side of the membrane. Residues 26–46 (LFLFMVPLVVISGFVFVNIGP) traverse the membrane as a helical; Signal-anchor for type II membrane protein segment. Residues 47-518 (KDSTSLLTSL…RRLNVKIREV (472 aa)) lie on the Lumenal side of the membrane. N-linked (GlcNAc...) asparagine glycans are attached at residues Asn104, Asn113, Asn120, Asn282, and Asn320.

This sequence belongs to the glycosyltransferase 47 family.

The protein localises to the golgi apparatus membrane. In terms of biological role, may be involved in cell wall biosynthesis. This Arabidopsis thaliana (Mouse-ear cress) protein is Probable glycosyltransferase At5g03795.